The chain runs to 362 residues: Zinc transporter 9 (362 aa).

Residues 1-21 (MAFDLKLTACLLLAVFSLAAA) form the signal peptide. Over 22 to 42 (ADCECQPSDEGHDAAKSRTLK) the chain is Extracellular. A helical membrane pass occupies residues 43–63 (VIAIFCILVGSSAGCAIPSLG). Topologically, residues 64–74 (RRFPALRPDTS) are cytoplasmic. Residues 75–95 (LFFALKAFAAGVILATAFVHI) traverse the membrane as a helical segment. Topologically, residues 96-120 (LPVSFDKLGSPCLVDGPWRKYPFTG) are extracellular. A helical membrane pass occupies residues 121–141 (LVAMLAAVATLLLDTIATGYF). Topologically, residues 142–207 (LQRAQDSRGA…EDRAKLVRHR (66 aa)) are cytoplasmic. A helical transmembrane segment spans residues 208-228 (VISQVFELGIIVHSIIIGISL). At 229–239 (GASESPSTIRP) the chain is on the extracellular side. A helical transmembrane segment spans residues 240–260 (LVAALTFHQFFEGIGLGGCIV). Over 261–269 (QARFHLKSA) the chain is Cytoplasmic. The chain crosses the membrane as a helical span at residues 270–290 (VTMAIFFSLTTPVGIMIGIGI). The Extracellular segment spans residues 291–301 (SSAYNENSPTA). A helical transmembrane segment spans residues 302–322 (LIVEGILDAAAAGILNYMALV). Residues 323 to 341 (DLLAEDFMNPRVRKSGRLQ) are Cytoplasmic-facing. Residues 342–362 (LIISILLLVGIALMSLLGIWA) traverse the membrane as a helical segment.

Belongs to the ZIP transporter (TC 2.A.5) family.

Its subcellular location is the cell membrane. In terms of biological role, zinc transporter that may be involved in zinc uptake from the rhizosphere. This Oryza sativa subsp. japonica (Rice) protein is Zinc transporter 9 (ZIP9).